A 288-amino-acid chain; its full sequence is MKKLSFQQIILTLQNYWQDYGCAILQPYDAHVGAGTFHPATVLRCLGTKPWSVAYVQPSRRPGDSRYGMHPNRMQHYYQFQVILKPSPDNIQELYLKSLECLGIDLKIHDIRFVEDDWESPTLGAAGLGWEVWCNGMEVSQFTYMQQIGGIECRPVAGEITYGLDRLALYIQGVDEVRELDWNGQVGEKALKYGEVDFEAERQFSKYNLELADSEMLLRHFKDSEDQCERLIKANLPMPAYDECLKASHAFNQLNALGVISVTERASYVLRVRHLARICCTKWLEMNK.

The protein belongs to the class-II aminoacyl-tRNA synthetase family. Tetramer of two alpha and two beta subunits.

The protein resides in the cytoplasm. It carries out the reaction tRNA(Gly) + glycine + ATP = glycyl-tRNA(Gly) + AMP + diphosphate. This Rickettsia massiliae (strain Mtu5) protein is Glycine--tRNA ligase alpha subunit.